The chain runs to 579 residues: Membrane frizzled-related protein (579 aa).

The Cytoplasmic segment spans residues 1–69; it reads MKDFSDVILC…RPDCRFSWLC (69 aa). Residues 70–90 traverse the membrane as a helical; Signal-anchor for type II membrane protein segment; sequence VLLLSSLLLLLLGLLVAIILA. Residues 91–579 are Extracellular-facing; that stretch reads QLQAAPPSGA…AADLEACAQP (489 aa). The segment at 100–143 is disordered; it reads ASHSPLPAGGLTTTTTTPTITTSQAAGTPKGQQESGVSPSPQST. A compositionally biased stretch (low complexity) spans 111-121; the sequence is TTTTTTPTITT. Over residues 122 to 143 the composition is skewed to polar residues; it reads SQAAGTPKGQQESGVSPSPQST. 2 disulfide bridges follow: Cys-144–Cys-170 and Cys-197–Cys-216. Residues 144–253 form the CUB 1 domain; it reads CGGLLSGPRG…FGFHAWYQAM (110 aa). Asn-227 carries N-linked (GlcNAc...) asparagine glycosylation. Residues 259 to 295 form the LDL-receptor class A 1 domain; it reads SCAHDEFRCDQLICLLPDSVCDGFANCADGSDETNCS. 5 disulfide bridges follow: Cys-260–Cys-272, Cys-267–Cys-285, Cys-279–Cys-294, Cys-301–Cys-327, and Cys-354–Cys-377. The CUB 2 domain occupies 301 to 414; that stretch reads CGGNLTGLQG…GGFSATYLAF (114 aa). Asn-415 carries an N-linked (GlcNAc...) asparagine glycan. The 36-residue stretch at 420–455 folds into the LDL-receptor class A 2 domain; sequence PCGPSELSCQAGGCKGVQWMCDMWRDCTDGSDDNCS. Disulfide bonds link Cys-421–Cys-433, Cys-428–Cys-446, Cys-440–Cys-454, Cys-466–Cys-528, Cys-474–Cys-521, Cys-512–Cys-549, Cys-538–Cys-576, and Cys-542–Cys-564. Positions 461-579 constitute an FZ domain; that stretch reads PPELACEPVQ…AADLEACAQP (119 aa).

As to quaternary structure, interacts with C1QTNF5. Specifically expressed in brain. Strongly expressed in medulla oblongata and to a lower extent in hippocampus and corpus callosum. Expressed in keratinocytes.

The protein localises to the apical cell membrane. Functionally, may play a role in eye development. This Homo sapiens (Human) protein is Membrane frizzled-related protein (MFRP).